Reading from the N-terminus, the 487-residue chain is UDP-N-acetylmuramate--L-alanine ligase (487 aa).

Gly130–Thr136 serves as a coordination point for ATP.

Belongs to the MurCDEF family.

It localises to the cytoplasm. It catalyses the reaction UDP-N-acetyl-alpha-D-muramate + L-alanine + ATP = UDP-N-acetyl-alpha-D-muramoyl-L-alanine + ADP + phosphate + H(+). It functions in the pathway cell wall biogenesis; peptidoglycan biosynthesis. Functionally, cell wall formation. This chain is UDP-N-acetylmuramate--L-alanine ligase, found in Photobacterium profundum (strain SS9).